Consider the following 132-residue polypeptide: Small ribosomal subunit protein uS8 (132 aa).

This sequence belongs to the universal ribosomal protein uS8 family. As to quaternary structure, part of the 30S ribosomal subunit. Contacts proteins S5 and S12.

Functionally, one of the primary rRNA binding proteins, it binds directly to 16S rRNA central domain where it helps coordinate assembly of the platform of the 30S subunit. The polypeptide is Small ribosomal subunit protein uS8 (Geobacillus sp. (strain WCH70)).